The primary structure comprises 492 residues: Probable cytochrome P450 513A3 (492 aa).

Residues 1–21 traverse the membrane as a helical segment; sequence MTSLTLYLIIFSIILYLFVNR. C437 contacts heme.

The protein belongs to the cytochrome P450 family. It depends on heme as a cofactor.

Its subcellular location is the membrane. This is Probable cytochrome P450 513A3 (cyp513A3) from Dictyostelium discoideum (Social amoeba).